The following is a 717-amino-acid chain: Mitochondrial potassium channel ATP-binding subunit (717 aa).

The transit peptide at 1-25 (MLVHLFRFGIRGGPVPGWSLQSLRF) directs the protein to the mitochondrion. The next 4 helical transmembrane spans lie at 127–147 (LLAL…NVQI), 178–198 (VQLL…LVLL), 278–298 (LMLA…GSGL), and 365–385 (NIAF…LVAG). An ABC transmembrane type-1 domain is found at 132 to 419 (AAIVLALGAA…LSVLFGQVVR (288 aa)). The 238-residue stretch at 454–691 (ITFQNVTFSY…GGLYSELIRR (238 aa)) folds into the ABC transporter domain. 489-496 (GQSGGGKT) contacts ATP. The disordered stretch occupies residues 695 to 717 (DASLTSTPPAEKPEDPKSCQSKA).

Belongs to the ABC transporter superfamily. ABCB family. Multidrug resistance exporter (TC 3.A.1.201) subfamily. In terms of assembly, the mitochondrial potassium channel (mitoK(ATP)) is composed of 4 subunits of CCDC51/MITOK and 4 subunits of ABCB8/MITOSUR. Interacts with PAAT. Interacts with NRP1; NRP1 regulates ABCB8/MITOSUR protein levels in mitochondria.

It localises to the mitochondrion inner membrane. Its activity is regulated as follows. Channel activity inhibited by ATP via ABCB8/MITOSUR subunit. In terms of biological role, ATP-binding subunit of the mitochondrial ATP-gated potassium channel (mitoK(ATP)). Together with pore-forming subunit CCDC51/MITOK of the mitoK(ATP) channel, mediates ATP-dependent potassium currents across the mitochondrial inner membrane. An increase in ATP intracellular levels closes the channel, inhibiting K(+) transport, whereas a decrease in ATP levels enhances K(+) uptake in the mitochondrial matrix. Plays a role in mitochondrial iron transport. Required for maintenance of normal cardiac function, possibly by influencing mitochondrial iron export and regulating the maturation of cytosolic iron sulfur cluster-containing enzymes. This Mus musculus (Mouse) protein is Mitochondrial potassium channel ATP-binding subunit.